The sequence spans 191 residues: Signal peptidase IB (191 aa).

The Cytoplasmic segment spans residues 1-7 (MKKEILE). A helical transmembrane segment spans residues 8 to 28 (WIISIAVAFVILFIVGKFIVT). The Extracellular segment spans residues 29–191 (PYTIKGESMD…HNFNPENTKN (163 aa)). Catalysis depends on residues Ser36 and Lys77.

The protein belongs to the peptidase S26 family.

The protein localises to the cell membrane. The enzyme catalyses Cleavage of hydrophobic, N-terminal signal or leader sequences from secreted and periplasmic proteins.. Essential for cell viability. This is Signal peptidase IB (spsB) from Staphylococcus aureus (strain COL).